A 157-amino-acid chain; its full sequence is DNA gyrase inhibitor 2 (157 aa).

The protein belongs to the DNA gyrase inhibitor family. In terms of assembly, interacts with DNA gyrase.

The protein resides in the cytoplasm. In terms of biological role, inhibits the supercoiling activity of DNA gyrase. Acts by inhibiting DNA gyrase at an early step, prior to (or at the step of) binding of DNA by the gyrase. It protects cells against toxins that target DNA gyrase, by inhibiting activity of these toxins and reducing the formation of lethal double-strand breaks in the cell. The chain is DNA gyrase inhibitor 2 from Dickeya dadantii (strain 3937) (Erwinia chrysanthemi (strain 3937)).